Consider the following 383-residue polypeptide: NAD(P) transhydrogenase subunit alpha part 1 (383 aa).

NAD(+) is bound by residues 131–134, Val-181, 201–203, and Gly-231; these read QNMD and DVR.

The protein belongs to the AlaDH/PNT family. As to quaternary structure, heterotrimer of two alpha chains and a beta (PntB) chain; in Rickettsia, the alpha chain is made of two subunits (PntAA and PntAB) and forms a dimer.

It carries out the reaction NAD(+) + NADPH + H(+)(in) = NADH + NADP(+) + H(+)(out). In terms of biological role, the transhydrogenation between NADH and NADP is coupled to respiration and ATP hydrolysis and functions as a proton pump across the membrane. The chain is NAD(P) transhydrogenase subunit alpha part 1 (pntAA) from Rickettsia prowazekii (strain Madrid E).